The primary structure comprises 302 residues: Exodeoxyribonuclease (302 aa).

The enzyme catalyses Exonucleolytic cleavage in the 5'- to 3'-direction to yield nucleoside 5'-phosphates.. In terms of biological role, this enzyme is essential for phage DNA replication; it is believed to function in the removal of DNA-linked RNA primers. It is also necessary for host DNA degradation and phage genetic recombination. The polypeptide is Exodeoxyribonuclease (6) (Enterobacteria phage T3 (Bacteriophage T3)).